Here is a 272-residue protein sequence, read N- to C-terminus: D-aminoacyl-tRNA deacylase (272 aa).

In terms of assembly, monomer. Zn(2+) serves as cofactor.

The enzyme catalyses a D-aminoacyl-tRNA + H2O = a tRNA + a D-alpha-amino acid + H(+). The catalysed reaction is glycyl-tRNA(Ala) + H2O = tRNA(Ala) + glycine + H(+). It catalyses the reaction D-tyrosyl-tRNA(Tyr) + H2O = D-tyrosine + tRNA(Tyr). In terms of biological role, D-aminoacyl-tRNA deacylase with broad substrate specificity. By recycling D-aminoacyl-tRNA to D-amino acids and free tRNA molecules, this enzyme counteracts the toxicity associated with the formation of D-aminoacyl-tRNA entities in vivo. Catalyzes the hydrolysis of D-tyrosyl-tRNA(Tyr) and D-aspartyl-tRNA(Asp). The polypeptide is D-aminoacyl-tRNA deacylase (Pyrococcus abyssi (strain GE5 / Orsay)).